Consider the following 1519-residue polypeptide: MNKKFKYKKSLLAAILSATLLAGCDGGGSGSSSDTPPVDSGTGSLPEVKPDPTPNPEPTPEPTPDPEPTPEPIPDPEPTPEPEPEPVPTKTGYLTLGGSQRVTGATCNGESSDGFTFKPGEDVTCVAGNTTIATFNTQSEAARSLRAVEKVSFSLEDAQELAGSDDKKSNAVSLVTSSNSCPANTEQVCLTFSSVIESKRFDSLYKQIDLAPEEFKKLVNEEVENNAATDKAPSTHTSPVVPVTTPGTKPDLNASFVSANAEQFYQYQPTEIILSEGRLVDSQGYGVAGVNYYTNSGRGVTGENGEFSFSWGEAISFGIDTFELGSVRGNKSTIALTELGDEVRGANIDQLIHRYSTTGQNNTRVVPDDVRKVFAEYPNVINEIINLSLSNGATLGEGEQVVNLPNEFIEQFNTGQAKEIDTAICAKTDGCNEARWFSLTTRNVNDGQIQGVINKLWGVDTNYKSVSKFHVFHDSTNFYGSTGNARGQAVVNISNAAFPILMARNDKNYWLAFGEKRAWDKNELAYITEAPSIVRPENVTRETASFNLPFISLGQVGDGKLMVIGNPHYNSILRCPNGYSWNGGVNKDGQCTLNSDPDDMKNFMENVLRYLSNDRWLPDAKSSMTVGTNLETVYFKKHGQVLGNSAPFAFHKDFTGITVKPMTSYGNLNPDEVPLLILNGFEYVTQWGSDPYSIPLRADTSKPKLTQQDVTDLIAYMNKGGSVLIMENVMSNLKEESASGFVRLLDAAGLSMALNKSVVNNDPQGYPDRVRQRRSTPIWVYERYPAVDGKPPYTIDDTTKEVIWKYQQENKPDDKPKLEVASWQEEVEGKQVTQFAFIDEADHKTPESLAAAKQRILDAFPGLEVCKDSDYHYEVNCLEYRPGTDVPVTGGMYVPQYTQLDLSADTAKAMLQAADLGTNIQRLYQHELYFRTNGRQGERLNSVDLERLYQNMSVWLWNETKYRYEEGKEDELGFKTFTEFLNCYTNNAYVGTQCSAELKKSLIDNKMIYGEESSKAGMMNPSYPLNYMEKPLTRLMLGRSWWDLNIKVDVEKYPGVVNTNGETVTQNINLYSAPTKWFAGNMQSTGLWAPAQQEVSIESKSTVPVTVTVALADDLTGREKHEVSLNRPPRVTKTYDLKANDKVTFKVPYGGLIYIKGDSKEVQSADFTFTGVVKAPFYKDGKWQHDLNSPAPLGELESASFVYTTPKKNLNASNYTGGLEQFANDLDTFASSMNDFYGRDSEDGKHRMFTYKNLPGHKHRFANDVQISIGDAHSGYPVMNSSFSPNSTTLPTTPLNDWLIWHEVGHNAAETPLTVPGATEVANNVLALYMQDRYLGKMNRVADDITVAPEYLEESNGQAWARGGAGDRLLMYAQLKEWAEKNFDIKKWYPDGTPLPEFYSEREGMKGWNLFQLMHRKARGDEVSNDKFGGKNYCAESNGNAADTLMLCASWVAQTDLSEFFKKWNPGANAYQLPGASEMSFEGGVSQSAYNTLASLDLPKPEQGPETINQVTEHKMSAE.

The N-terminal stretch at 1 to 23 (MNKKFKYKKSLLAAILSATLLAG) is a signal peptide. 2 disordered regions span residues 22–107 (AGCD…GATC) and 226–247 (NAAT…TTPG). The N-palmitoyl cysteine moiety is linked to residue Cys24. Cys24 carries the S-diacylglycerol cysteine lipid modification. Low complexity predominate over residues 31-42 (SSSDTPPVDSGT). A compositionally biased stretch (pro residues) spans 51-77 (DPTPNPEPTPEPTPDPEPTPEPIPDPE). Over residues 97 to 107 (GGSQRVTGATC) the composition is skewed to polar residues. Positions 234–247 (STHTSPVVPVTTPG) are enriched in low complexity. Residues 1080-1380 (GNMQSTGLWA…MYAQLKEWAE (301 aa)) form the Peptidase M60 domain. A disordered region spans residues 1497 to 1519 (DLPKPEQGPETINQVTEHKMSAE).

It to V.cholerae AcfD (VC_0845).

The protein localises to the cell membrane. Its function is as follows. May be a substrate of the type II secretion system beta (T2SS-beta). The sequence is that of Putative lipoprotein YghJ (yghJ) from Escherichia coli O78:H11 (strain H10407 / ETEC).